Consider the following 219-residue polypeptide: 7-cyano-7-deazaguanine synthase (219 aa).

10–20 (FSGGQDSTTCL) serves as a coordination point for ATP. Zn(2+) contacts are provided by Cys186, Cys195, Cys198, and Cys201.

It belongs to the QueC family. As to quaternary structure, homodimer. The cofactor is Zn(2+).

It catalyses the reaction 7-carboxy-7-deazaguanine + NH4(+) + ATP = 7-cyano-7-deazaguanine + ADP + phosphate + H2O + H(+). The protein operates within purine metabolism; 7-cyano-7-deazaguanine biosynthesis. In terms of biological role, catalyzes the ATP-dependent conversion of 7-carboxy-7-deazaguanine (CDG) to 7-cyano-7-deazaguanine (preQ(0)). This Bacillus licheniformis (strain ATCC 14580 / DSM 13 / JCM 2505 / CCUG 7422 / NBRC 12200 / NCIMB 9375 / NCTC 10341 / NRRL NRS-1264 / Gibson 46) protein is 7-cyano-7-deazaguanine synthase.